We begin with the raw amino-acid sequence, 732 residues long: Cullin-3A (732 aa).

The Cullin neddylation domain maps to 662-724; the sequence is DRKPQIEAAI…RDFLERDSTD (63 aa). A Glycyl lysine isopeptide (Lys-Gly) (interchain with G-Cter in NEDD8) cross-link involves residue Lys-676.

This sequence belongs to the cullin family. As to quaternary structure, interacts with CSN2 and RBX1A. Interacts with BTB/POZ domain-containing proteins BPM1, BPM2, BPM3, BPM6, BT1, BT2, BT3, BT5, AT1G01640, AT1G21780 and AT5G48510. Interacts with SR1IP1. Interacts with NPR3 and NPR4. Binds to NPR1; this interaction requires NPR3 and NPR4. Post-translationally, neddylated. Deneddylated via its interaction with the COP9 signalosome (CSN) complex.

Its function is as follows. Component of the cullin-RING ubiquitin ligases (CRL), or CUL3-RBX1-BTB protein E3 ligase complexes which mediate the ubiquitination and subsequent proteasomal degradation of target proteins. The functional specificity of the CRL complex depends on the BTB domain-containing protein as the substrate recognition component. Involved in embryo pattern formation and endosperm development. Required for the normal division and organization of the root stem cells and columella root cap cells. Regulates primary root growth by an unknown pathway, but in an ethylene-dependent manner. Functions in distal root patterning, by an ethylene-independent mechanism. Functionally redundant with CUL3B. The sequence is that of Cullin-3A from Arabidopsis thaliana (Mouse-ear cress).